A 71-amino-acid polypeptide reads, in one-letter code: uncharacterized protein (71 aa).

This is an uncharacterized protein from Cassava vein mosaic virus (CsVMV).